A 234-amino-acid polypeptide reads, in one-letter code: O-antigen biosynthesis glycosyltransferase WbnI (234 aa).

Residues 8–13 (ICTGEY), 93–95 (NAV), and 115–118 (HPGY) contribute to the substrate site. The active-site Nucleophile is the Glu-185.

It belongs to the glycosyltransferase 6 family. Mn(2+) serves as cofactor.

It carries out the reaction alpha-L-Fuc-(1-&gt;2)-beta-D-Gal-(1-&gt;3)-alpha-D-GalNAc-(1-&gt;3)-alpha-D-GalNAc-di-trans,octa-cis-undecaprenyl diphosphate + UDP-alpha-D-galactose = alpha-L-Fuc-(1-&gt;2)-[alpha-D-Gal-(1-&gt;3)]-beta-D-Gal-(1-&gt;3)-alpha-D-GalNAc-(1-&gt;3)-alpha-D-GalNAc-di-trans,octa-cis-undecaprenyl diphosphate + UDP + H(+). It participates in bacterial outer membrane biogenesis; LPS O-antigen biosynthesis. Its function is as follows. Involved in the assembly of the O-repeating unit during O-antigen biosynthesis. This Escherichia coli protein is O-antigen biosynthesis glycosyltransferase WbnI.